The chain runs to 348 residues: Zinc finger protein 843 (348 aa).

The segment at 33 to 55 (CKCKACGRGFTQSASLLQHWRVH) adopts a C2H2-type 1 zinc-finger fold. The segment at 145 to 167 (FCCCSCGDSVNEKTSLSQRVLPH) adopts a C2H2-type 2; degenerate zinc-finger fold. Over residues 184–195 (APSSVAPDSTSG) the composition is skewed to polar residues. 2 disordered regions span residues 184–203 (APSSVAPDSTSGLRPCGSPG) and 256–329 (ATQP…WRGA).

The protein is Zinc finger protein 843 (ZNF843) of Homo sapiens (Human).